The primary structure comprises 603 residues: MLTEYGDFKRTKYCGEVSEEDIGKEVKLAGWVHRKRHHGGVIFIDLRDREGIVQVVVEEKTNPEAYEVADKLKSEYVIGVVGKVRKRPEGTENPKLKTGYVEVVADRILVFNTSEALPFPVEEETHVSEETKLKYRYIDLRRESMKNNLIFRHRVYQITRNFFTKEGFIEIETPFLTKSTPEGARDFLVPSRLHPGKFYALPQSPQLFKQILMIAGFDRYFQIVKCFRDEDLRADRQPEFTQIDYEMSFVSEEEVMDVAERLIATLFKELLGVELKTPFERISYREAMEKYGTDKPDRRFGLELIELTDIFKNTAFKVFKSVVEAGGIIKAINFKGSNLSRKEIDELTKFVQSLGAKGLAWIKVEKDKLTSPIVKFFTEEETQKLLERTKAEPGDVILFSADKKEMVYKILGNLRLHLGKKYKLIDESKWDVFWIVDFPLMEWDEEEERFVSLHHPFTMPREENIPKLKEALEEEDLEKKKEIVHSVRARAYDMVLNGEEIGGGSIRIHRRDIQEVVFKLLGIGEVEAQEKFGFLLEALKYGAPPHGGLAFGLDRVVALMLGLDSIRDTIAFPKTQRGICPLTGAPDYVDPKQLKELHIKVLE.

Glutamate 182 contacts L-aspartate. Residues 206–209 (QLFK) are aspartate. Position 228 (arginine 228) interacts with L-aspartate. ATP contacts are provided by residues 228 to 230 (RDE) and glutamine 237. Histidine 454 lines the L-aspartate pocket. Glutamate 500 serves as a coordination point for ATP. Arginine 507 is an L-aspartate binding site. 552 to 555 (GLDR) contributes to the ATP binding site.

Belongs to the class-II aminoacyl-tRNA synthetase family. Type 1 subfamily. Homodimer.

The protein resides in the cytoplasm. It carries out the reaction tRNA(Asx) + L-aspartate + ATP = L-aspartyl-tRNA(Asx) + AMP + diphosphate. Functionally, aspartyl-tRNA synthetase with relaxed tRNA specificity since it is able to aspartylate not only its cognate tRNA(Asp) but also tRNA(Asn). Reaction proceeds in two steps: L-aspartate is first activated by ATP to form Asp-AMP and then transferred to the acceptor end of tRNA(Asp/Asn). This is Aspartate--tRNA(Asp/Asn) ligase from Aquifex aeolicus (strain VF5).